We begin with the raw amino-acid sequence, 501 residues long: Glutamyl-tRNA(Gln) amidotransferase subunit A (501 aa).

Catalysis depends on charge relay system residues Lys-80 and Ser-155. Ser-179 (acyl-ester intermediate) is an active-site residue.

This sequence belongs to the amidase family. GatA subfamily. In terms of assembly, heterotrimer of A, B and C subunits.

It carries out the reaction L-glutamyl-tRNA(Gln) + L-glutamine + ATP + H2O = L-glutaminyl-tRNA(Gln) + L-glutamate + ADP + phosphate + H(+). In terms of biological role, allows the formation of correctly charged Gln-tRNA(Gln) through the transamidation of misacylated Glu-tRNA(Gln) in organisms which lack glutaminyl-tRNA synthetase. The reaction takes place in the presence of glutamine and ATP through an activated gamma-phospho-Glu-tRNA(Gln). The chain is Glutamyl-tRNA(Gln) amidotransferase subunit A from Cutibacterium acnes (strain DSM 16379 / KPA171202) (Propionibacterium acnes).